Here is a 74-residue protein sequence, read N- to C-terminus: Small ribosomal subunit protein bS18 (74 aa).

This sequence belongs to the bacterial ribosomal protein bS18 family. In terms of assembly, part of the 30S ribosomal subunit. Forms a tight heterodimer with protein bS6.

Its function is as follows. Binds as a heterodimer with protein bS6 to the central domain of the 16S rRNA, where it helps stabilize the platform of the 30S subunit. The sequence is that of Small ribosomal subunit protein bS18 from Sphingopyxis alaskensis (strain DSM 13593 / LMG 18877 / RB2256) (Sphingomonas alaskensis).